The following is a 210-amino-acid chain: Large ribosomal subunit protein uL3 (210 aa).

Residues 126-152 (HGFRGGPKTHGQSDRHRAPGSIGAGTT) are disordered.

It belongs to the universal ribosomal protein uL3 family. Part of the 50S ribosomal subunit. Forms a cluster with proteins L14 and L19.

In terms of biological role, one of the primary rRNA binding proteins, it binds directly near the 3'-end of the 23S rRNA, where it nucleates assembly of the 50S subunit. The protein is Large ribosomal subunit protein uL3 of Chloroflexus aurantiacus (strain ATCC 29366 / DSM 635 / J-10-fl).